The chain runs to 387 residues: Muscleblind-like protein 1 (387 aa).

T6 is modified (phosphothreonine). C3H1-type zinc fingers lie at residues 13 to 41, 47 to 73, 178 to 206, and 214 to 240; these read WLTL…HPSK, NGRV…HPPP, TDRL…HPAD, and DNTV…HPPA.

It belongs to the muscleblind family. As to quaternary structure, interacts with DDX1 and YBX1. Interacts with HNRNPH1; the interaction in RNA-independent. Interacts with RBPMS; the interaction allows cooperative assembly of RNA-bound stable cell-specific alternative splicing regulatory complexes.

It is found in the nucleus. The protein localises to the cytoplasm. The protein resides in the cytoplasmic granule. Mediates pre-mRNA alternative splicing regulation. Acts either as activator or repressor of splicing on specific pre-mRNA targets. Inhibits cardiac troponin-T (TNNT2) pre-mRNA exon inclusion but induces insulin receptor (IR) pre-mRNA exon inclusion in muscle. Antagonizes the alternative splicing activity pattern of CELF proteins. Regulates the TNNT2 exon 5 skipping through competition with U2AF2. Inhibits the formation of the spliceosome A complex on intron 4 of TNNT2 pre-mRNA. Binds to the stem-loop structure within the polypyrimidine tract of TNNT2 intron 4 during spliceosome assembly. Binds to the 5'-YGCU(U/G)Y-3'consensus sequence. Binds to the IR RNA. Binds to expanded CUG repeat RNA, which folds into a hairpin structure containing GC base pairs and bulged, unpaired U residues. Together with RNA binding proteins RBPMS and RBFOX2, activates vascular smooth muscle cells alternative splicing events. Regulates NCOR2 alternative splicing. This is Muscleblind-like protein 1 from Rattus norvegicus (Rat).